Here is a 30-residue protein sequence, read N- to C-terminus: Uperin-6.2 (30 aa).

As to expression, expressed by the skin dorsal glands.

It localises to the secreted. The polypeptide is Uperin-6.2 (Uperoleia inundata (Floodplain toadlet)).